A 426-amino-acid chain; its full sequence is D-tagatose-1,6-bisphosphate aldolase subunit KbaZ (426 aa).

It belongs to the GatZ/KbaZ family. KbaZ subfamily. In terms of assembly, forms a complex with KbaY.

Its pathway is carbohydrate metabolism; D-tagatose 6-phosphate degradation; D-glyceraldehyde 3-phosphate and glycerone phosphate from D-tagatose 6-phosphate: step 2/2. Its function is as follows. Component of the tagatose-1,6-bisphosphate aldolase KbaYZ that is required for full activity and stability of the Y subunit. Could have a chaperone-like function for the proper and stable folding of KbaY. When expressed alone, KbaZ does not show any aldolase activity. The chain is D-tagatose-1,6-bisphosphate aldolase subunit KbaZ from Escherichia coli O139:H28 (strain E24377A / ETEC).